We begin with the raw amino-acid sequence, 901 residues long: HTH-type transcriptional regulator MalT (901 aa).

An ATP-binding site is contributed by 39 to 46; it reads SPAGYGKT. Residues 829–894 enclose the HTH luxR-type domain; it reads ELIRTSPLTQ…AAVQHAQKLL (66 aa). Residues 853–872 constitute a DNA-binding region (H-T-H motif); the sequence is NEQIAGELEVAATTIKTHIR.

Belongs to the MalT family. As to quaternary structure, monomer in solution. Oligomerizes to an active state in the presence of the positive effectors ATP and maltotriose.

With respect to regulation, activated by ATP and maltotriose, which are both required for DNA binding. In terms of biological role, positively regulates the transcription of the maltose regulon whose gene products are responsible for uptake and catabolism of malto-oligosaccharides. Specifically binds to the promoter region of its target genes, recognizing a short DNA motif called the MalT box. The chain is HTH-type transcriptional regulator MalT from Shigella flexneri serotype 5b (strain 8401).